Reading from the N-terminus, the 397-residue chain is Ribosomal RNA large subunit methyltransferase I (397 aa).

Positions 2 to 80 constitute a PUA domain; it reads SAAIYLVKGR…QDINRAFFVK (79 aa).

This sequence belongs to the methyltransferase superfamily. RlmI family.

It is found in the cytoplasm. It carries out the reaction cytidine(1962) in 23S rRNA + S-adenosyl-L-methionine = 5-methylcytidine(1962) in 23S rRNA + S-adenosyl-L-homocysteine + H(+). Functionally, specifically methylates the cytosine at position 1962 (m5C1962) of 23S rRNA. This is Ribosomal RNA large subunit methyltransferase I from Vibrio vulnificus (strain CMCP6).